The primary structure comprises 417 residues: Serine hydroxymethyltransferase (417 aa).

(6S)-5,6,7,8-tetrahydrofolate is bound by residues Leu120 and 124-126; that span reads GHL. An N6-(pyridoxal phosphate)lysine modification is found at Lys229.

Belongs to the SHMT family. Homodimer. Pyridoxal 5'-phosphate is required as a cofactor.

Its subcellular location is the cytoplasm. The enzyme catalyses (6R)-5,10-methylene-5,6,7,8-tetrahydrofolate + glycine + H2O = (6S)-5,6,7,8-tetrahydrofolate + L-serine. The protein operates within one-carbon metabolism; tetrahydrofolate interconversion. It functions in the pathway amino-acid biosynthesis; glycine biosynthesis; glycine from L-serine: step 1/1. Its function is as follows. Catalyzes the reversible interconversion of serine and glycine with tetrahydrofolate (THF) serving as the one-carbon carrier. This reaction serves as the major source of one-carbon groups required for the biosynthesis of purines, thymidylate, methionine, and other important biomolecules. Also exhibits THF-independent aldolase activity toward beta-hydroxyamino acids, producing glycine and aldehydes, via a retro-aldol mechanism. The chain is Serine hydroxymethyltransferase from Anaeromyxobacter dehalogenans (strain 2CP-1 / ATCC BAA-258).